A 901-amino-acid chain; its full sequence is Pyruvate, phosphate dikinase (901 aa).

Residues 1-321 (MNIAKSIHFL…WLIEQKPVEA (321 aa)) are N-terminal. The segment at 322-380 (KSTISLVRLLLDLYEREVVDAEYVVKSVKPGQLNEILHPVIDMTSVTGLKSSQGGIIGV) is linker 1. A central region spans residues 381-482 (PGAAVGRVYF…TINEGDFVTL (102 aa)). Phosphoserine; by PDRP1 is present on S440. H442 (tele-phosphohistidine intermediate) is an active-site residue. The segment at 483–522 (NVPYYGESTLYMGAAQLIEPDPETSGLVSFIELAKGFVRS) is linker 2. The segment at 523 to 901 (FHVRANADSP…SAKSGGRRAR (379 aa)) is C-terminal. Substrate contacts are provided by R550, R606, E750, G771, T772, N773, and D774. Mg(2+) is bound at residue E750. A Mg(2+)-binding site is contributed by D774. The active-site Proton donor is C835. The interval 879-901 (EKEGRKPAWRGRSSAKSGGRRAR) is disordered.

This sequence belongs to the PEP-utilizing enzyme family. In terms of assembly, homodimer. Mg(2+) serves as cofactor. Phosphorylation of Ser-440 in the dark inactivates the enzyme. Dephosphorylation upon light stimulation reactivates the enzyme.

The enzyme catalyses pyruvate + phosphate + ATP = phosphoenolpyruvate + AMP + diphosphate + H(+). Its activity is regulated as follows. Activated by light-induced dephosphorylation. Inhibited by dark-induced phosphorylation. Both reactions are catalyzed by PDRP1. Catalyzes the reversible phosphorylation of pyruvate and phosphate. In Treponema pallidum (strain Nichols), this protein is Pyruvate, phosphate dikinase (ppdK).